Reading from the N-terminus, the 120-residue chain is Small ribosomal subunit protein bS6 (120 aa).

Residues 97–112 are compositionally biased toward polar residues; that stretch reads SNEPSPILKNQSTENT. The disordered stretch occupies residues 97–120; the sequence is SNEPSPILKNQSTENTPVIDVTAN.

The protein belongs to the bacterial ribosomal protein bS6 family.

Binds together with bS18 to 16S ribosomal RNA. The protein is Small ribosomal subunit protein bS6 of Rickettsia bellii (strain RML369-C).